A 218-amino-acid polypeptide reads, in one-letter code: Adenylate kinase (218 aa).

Residue 10 to 15 coordinates ATP; it reads GAGKGT. Residues 30 to 59 form an NMP region; it reads STGDMLRAAVKAGTPLGLEAKKVMDAGGLV. Residues Thr-31, Arg-36, 57–59, 85–88, and Gln-92 contribute to the AMP site; these read GLV and GFPR. The tract at residues 122-159 is LID; it reads GRRVHPASGRVYHTKYNPPKVEGKDDETGDELVQRDDD. ATP contacts are provided by residues Arg-123 and 132–133; that span reads VY. The segment at 139 to 160 is disordered; the sequence is PPKVEGKDDETGDELVQRDDDQ. Arg-156 and Arg-167 together coordinate AMP. Gly-203 serves as a coordination point for ATP.

It belongs to the adenylate kinase family. Monomer.

The protein resides in the cytoplasm. The catalysed reaction is AMP + ATP = 2 ADP. It functions in the pathway purine metabolism; AMP biosynthesis via salvage pathway; AMP from ADP: step 1/1. Its function is as follows. Catalyzes the reversible transfer of the terminal phosphate group between ATP and AMP. Plays an important role in cellular energy homeostasis and in adenine nucleotide metabolism. In Alcanivorax borkumensis (strain ATCC 700651 / DSM 11573 / NCIMB 13689 / SK2), this protein is Adenylate kinase.